Reading from the N-terminus, the 875-residue chain is ATP-dependent helicase Lhr-Core (875 aa).

ATP contacts are provided by Gln-35, Lys-58, Thr-59, Asp-173, Glu-174, Ile-355, Arg-372, and His-375. The Helicase ATP-binding domain occupies 39 to 230 (IPLIKQNYNV…FLVGKDREYR (192 aa)). The short motif at 173-176 (DEIH) is the DEIH box element. The Helicase C-terminal domain occupies 247-419 (PVKDLVHSSE…SIHIPKNPLD (173 aa)). The tract at residues 420 to 506 (VLSQIIVSAS…IFYTNSGTIP (87 aa)) is WH domain. Residues 507-875 (DEAMISVVTE…VNIELEYTSV (369 aa)) are domain 4.

The protein belongs to the Lhr helicase family. Lhr-Core subfamily. In terms of assembly, monomer and homodimer. The monomeric form has helicase, ATPase and strand annealing activities, while the dimeric form only has ATPAse and strand annealing activities. Interacts with DNA topoisomerase 3 (topA).

The catalysed reaction is Couples ATP hydrolysis with the unwinding of duplex DNA by translocating in the 3'-5' direction.. It catalyses the reaction ATP + H2O = ADP + phosphate + H(+). Its activity is regulated as follows. DNA topoisomerase 3 (topA) inhibits helicase activity on Holliday junctions (HJ) but has no effect on ATPase activity. In terms of biological role, DNA helicase that translocates in a 3'-5' direction on single-stranded (ss)DNA, probably involved in DNA repair. Unwinds DNA in a 3'-5' direction, unwinding is ATP-dependent, acts preferentially on fork and 3'-tailed DNA; bubble and blunt-ended double-stranded (ds)DNA are not substrates. Has winding and unwinding activity, unwinds Holliday junction (HJ) DNA in the presence of ATP, the main product is forked DNA, single-stranded binding protein (SSB) does not stimulate activity. Anneals complementary oligonucleotides in an ATP-independent manner to form HJ and fork structures, thus can perform strand exchange. Preferentially binds HJ, forked and ssDNA, dsDNA is bound less well. LhrC-Core (Hel112) inhibits the exonuclease activity of the HerA-NurA complex on ss- and dsDNA, has no effect on ssDNA nicking by NurA; HerA-NurA are involved in DNA end-resection during DNA double-strand break repair. The polypeptide is ATP-dependent helicase Lhr-Core (Saccharolobus solfataricus (strain ATCC 35092 / DSM 1617 / JCM 11322 / P2) (Sulfolobus solfataricus)).